The primary structure comprises 446 residues: Chromosomal replication initiator protein DnaA (446 aa).

The interval 1–81 is domain I, interacts with DnaA modulators; the sequence is MENIADLWNS…AKLNIRFIIP (81 aa). Positions 81-109 are domain II; it reads PQSQTEEEVDYPPAKAKKMNDESNHLPQS. Residues 110 to 326 are domain III, AAA+ region; it reads MLNPKYTFDT…GALIRVVAYS (217 aa). Positions 154, 156, 157, and 158 each coordinate ATP. The segment at 327-446 is domain IV, binds dsDNA; the sequence is SLINKDINAD…QIEEINDILK (120 aa).

It belongs to the DnaA family. In terms of assembly, oligomerizes as a right-handed, spiral filament on DNA at oriC.

The protein resides in the cytoplasm. In terms of biological role, plays an essential role in the initiation and regulation of chromosomal replication. ATP-DnaA binds to the origin of replication (oriC) to initiate formation of the DNA replication initiation complex once per cell cycle. Binds the DnaA box (a 9 base pair repeat at the origin) and separates the double-stranded (ds)DNA. Forms a right-handed helical filament on oriC DNA; dsDNA binds to the exterior of the filament while single-stranded (ss)DNA is stabiized in the filament's interior. The ATP-DnaA-oriC complex binds and stabilizes one strand of the AT-rich DNA unwinding element (DUE), permitting loading of DNA polymerase. After initiation quickly degrades to an ADP-DnaA complex that is not apt for DNA replication. Binds acidic phospholipids. This is Chromosomal replication initiator protein DnaA from Bacillus cytotoxicus (strain DSM 22905 / CIP 110041 / 391-98 / NVH 391-98).